The following is a 222-amino-acid chain: Glutathione S-transferase A6 (222 aa).

Residues Glu-3–Gly-83 form the GST N-terminal domain. Glutathione-binding positions include Tyr-9, Arg-45, Gln-54–Val-55, and Gln-67–Thr-68. The GST C-terminal domain occupies Asp-85–Val-208.

It belongs to the GST superfamily. Alpha family. Homodimer or heterodimer of GSTA1 and GSTA2.

It is found in the cytoplasm. It carries out the reaction RX + glutathione = an S-substituted glutathione + a halide anion + H(+). Conjugation of reduced glutathione to a wide number of exogenous and endogenous hydrophobic electrophiles. This is Glutathione S-transferase A6 (Gsta6) from Rattus norvegicus (Rat).